The chain runs to 357 residues: Phenylalanine--tRNA ligase alpha subunit (357 aa).

Glu-257 contributes to the Mg(2+) binding site.

Belongs to the class-II aminoacyl-tRNA synthetase family. Phe-tRNA synthetase alpha subunit type 1 subfamily. Tetramer of two alpha and two beta subunits. The cofactor is Mg(2+).

It is found in the cytoplasm. It carries out the reaction tRNA(Phe) + L-phenylalanine + ATP = L-phenylalanyl-tRNA(Phe) + AMP + diphosphate + H(+). The protein is Phenylalanine--tRNA ligase alpha subunit of Roseobacter denitrificans (strain ATCC 33942 / OCh 114) (Erythrobacter sp. (strain OCh 114)).